The chain runs to 173 residues: Co-chaperone protein HscB homolog (173 aa).

Residues 5 to 77 form the J domain; it reads CHFALFDLQP…PRRARYLLAI (73 aa).

Belongs to the HscB family. In terms of assembly, interacts with HscA and stimulates its ATPase activity.

Its function is as follows. Co-chaperone involved in the maturation of iron-sulfur cluster-containing proteins. Seems to help targeting proteins to be folded toward HscA. This is Co-chaperone protein HscB homolog from Pseudomonas putida (strain W619).